Reading from the N-terminus, the 389-residue chain is Chaperone protein DnaJ (389 aa).

In terms of domain architecture, J spans 6–70 (DYYEILGLSK…EKRAQYDRFG (65 aa)). A CR-type zinc finger spans residues 131-213 (GVRKDIDIPR…CSGAGRVRSR (83 aa)). Cys-144, Cys-147, Cys-161, Cys-164, Cys-187, Cys-190, Cys-201, and Cys-204 together coordinate Zn(2+). 4 CXXCXGXG motif repeats span residues 144 to 151 (CSTCSGTG), 161 to 168 (CPNCGGTG), 187 to 194 (CSACHGRG), and 201 to 208 (CPTCSGAG). The segment at 145–167 (STCSGTGAKPGTSPKRCPNCGGT) is disordered. The disordered stretch occupies residues 351 to 389 (LSNGKKPEAEERSRSDKQKSEKPRKSKGLFEKVKDAFES). Basic and acidic residues predominate over residues 355–389 (KKPEAEERSRSDKQKSEKPRKSKGLFEKVKDAFES).

The protein belongs to the DnaJ family. Homodimer. The cofactor is Zn(2+).

It localises to the cytoplasm. Its function is as follows. Participates actively in the response to hyperosmotic and heat shock by preventing the aggregation of stress-denatured proteins and by disaggregating proteins, also in an autonomous, DnaK-independent fashion. Unfolded proteins bind initially to DnaJ; upon interaction with the DnaJ-bound protein, DnaK hydrolyzes its bound ATP, resulting in the formation of a stable complex. GrpE releases ADP from DnaK; ATP binding to DnaK triggers the release of the substrate protein, thus completing the reaction cycle. Several rounds of ATP-dependent interactions between DnaJ, DnaK and GrpE are required for fully efficient folding. Also involved, together with DnaK and GrpE, in the DNA replication of plasmids through activation of initiation proteins. The protein is Chaperone protein DnaJ of Methanosarcina mazei (strain ATCC BAA-159 / DSM 3647 / Goe1 / Go1 / JCM 11833 / OCM 88) (Methanosarcina frisia).